Here is a 341-residue protein sequence, read N- to C-terminus: Aspartate carbamoyltransferase catalytic subunit (341 aa).

The carbamoyl phosphate site is built by arginine 89 and threonine 90. Lysine 117 lines the L-aspartate pocket. Residues arginine 139, histidine 169, and glutamine 172 each coordinate carbamoyl phosphate. L-aspartate is bound by residues arginine 202 and arginine 257. Residues glycine 298 and proline 299 each coordinate carbamoyl phosphate.

It belongs to the aspartate/ornithine carbamoyltransferase superfamily. ATCase family. In terms of assembly, heterododecamer (2C3:3R2) of six catalytic PyrB chains organized as two trimers (C3), and six regulatory PyrI chains organized as three dimers (R2).

It catalyses the reaction carbamoyl phosphate + L-aspartate = N-carbamoyl-L-aspartate + phosphate + H(+). It participates in pyrimidine metabolism; UMP biosynthesis via de novo pathway; (S)-dihydroorotate from bicarbonate: step 2/3. In terms of biological role, catalyzes the condensation of carbamoyl phosphate and aspartate to form carbamoyl aspartate and inorganic phosphate, the committed step in the de novo pyrimidine nucleotide biosynthesis pathway. In Paraburkholderia xenovorans (strain LB400), this protein is Aspartate carbamoyltransferase catalytic subunit.